Consider the following 87-residue polypeptide: U15-lycotoxin-Ls1f (87 aa).

The first 20 residues, methionine 1–serine 20, serve as a signal peptide directing secretion. The WAP domain maps to aspartate 21–threonine 66. Cystine bridges form between cysteine 24/cysteine 54, cysteine 32/cysteine 58, cysteine 41/cysteine 53, cysteine 42/cysteine 80, and cysteine 47/cysteine 62.

The protein belongs to the venom protein 11 family. 01 (wap-1) subfamily. Post-translationally, contains 5 disulfide bonds. As to expression, expressed by the venom gland.

The protein localises to the secreted. Functionally, has antibacterial activity. The chain is U15-lycotoxin-Ls1f from Lycosa singoriensis (Wolf spider).